The primary structure comprises 334 residues: Glyceraldehyde-3-phosphate dehydrogenase (334 aa).

Residues 12–13, Asp34, and Arg79 each bind NAD(+); that span reads RI. D-glyceraldehyde 3-phosphate is bound by residues 150–152, Thr181, 210–211, and Arg233; these read SCT and TG. The active-site Nucleophile is the Cys151. Asn315 provides a ligand contact to NAD(+).

This sequence belongs to the glyceraldehyde-3-phosphate dehydrogenase family. In terms of assembly, homotetramer.

It localises to the cytoplasm. The enzyme catalyses D-glyceraldehyde 3-phosphate + phosphate + NAD(+) = (2R)-3-phospho-glyceroyl phosphate + NADH + H(+). It participates in carbohydrate degradation; glycolysis; pyruvate from D-glyceraldehyde 3-phosphate: step 1/5. In Wickerhamomyces ciferrii (strain ATCC 14091 / BCRC 22168 / CBS 111 / JCM 3599 / NBRC 0793 / NRRL Y-1031 F-60-10) (Yeast), this protein is Glyceraldehyde-3-phosphate dehydrogenase (GPD).